The primary structure comprises 413 residues: MYNYLLIRYGEIGLKGKNRSYFEKSLVKNMQSALKDLEIGKIKSTQGRMYIPLSGSSDELTRVLDRVTRVFGIETVSPAVKVESDLEVIKKTALQVFKNHMDSISPQNQVSFKVDCRRADKLFSKNSMEMNQILGAHILDHVPGLKVDVKQPQILLQVEIREDGTYIFTEKIPGHGGLPIGTTGKGVLMLSGGIDSPVAGWLAMKRGIQVVGLHFHSYPFTSQRALKKVEDISQVLSRYGTGPTGGFKLITNHFTDIQKAIQNYCSESMWVTVMRRFMFYIANRMAQKEQAMTVVTGENVGQVASQTLESMHAVSQDVVNLPILRPLAGLDKKEIMSKAETIGTYDISIRPYEDCCTLFLPKNPKTRPSLEQTKREISKLNFEELVEESLEKTEIKYFEPYQDITEEELTFDV.

Residues 61–171 enclose the THUMP domain; the sequence is TRVLDRVTRV…EDGTYIFTEK (111 aa). ATP-binding positions include 189–190, 214–215, R275, G297, and Q306; these read ML and HF.

This sequence belongs to the ThiI family.

The protein resides in the cytoplasm. The enzyme catalyses [ThiI sulfur-carrier protein]-S-sulfanyl-L-cysteine + a uridine in tRNA + 2 reduced [2Fe-2S]-[ferredoxin] + ATP + H(+) = [ThiI sulfur-carrier protein]-L-cysteine + a 4-thiouridine in tRNA + 2 oxidized [2Fe-2S]-[ferredoxin] + AMP + diphosphate. It carries out the reaction [ThiS sulfur-carrier protein]-C-terminal Gly-Gly-AMP + S-sulfanyl-L-cysteinyl-[cysteine desulfurase] + AH2 = [ThiS sulfur-carrier protein]-C-terminal-Gly-aminoethanethioate + L-cysteinyl-[cysteine desulfurase] + A + AMP + 2 H(+). Its pathway is cofactor biosynthesis; thiamine diphosphate biosynthesis. Catalyzes the ATP-dependent transfer of a sulfur to tRNA to produce 4-thiouridine in position 8 of tRNAs, which functions as a near-UV photosensor. Also catalyzes the transfer of sulfur to the sulfur carrier protein ThiS, forming ThiS-thiocarboxylate. This is a step in the synthesis of thiazole, in the thiamine biosynthesis pathway. The sulfur is donated as persulfide by IscS. The chain is Probable tRNA sulfurtransferase from Natranaerobius thermophilus (strain ATCC BAA-1301 / DSM 18059 / JW/NM-WN-LF).